The sequence spans 553 residues: Phosphoglucomutase (553 aa).

Residues 1-25 (MQATIKRYPTSPISGQTLGTSGLRK) are disordered. Residues 11-20 (SPISGQTLGT) are compositionally biased toward polar residues. Residues Thr-20, Arg-24, 117-118 (SH), and Lys-131 each bind substrate. The Phosphoserine intermediate role is filled by Ser-117. Ser-117 provides a ligand contact to Mg(2+). Mg(2+) contacts are provided by Asp-289, Asp-291, and Asp-293. Substrate contacts are provided by residues 293–294 (DR), Thr-352, 371–373 (EES), Lys-384, and Arg-509.

The protein belongs to the phosphohexose mutase family. Mg(2+) serves as cofactor.

It is found in the cytoplasm. It carries out the reaction alpha-D-glucose 1-phosphate = alpha-D-glucose 6-phosphate. Catalyzes the reversible conversion of glucose 1-phosphate into glucose 6-phosphate. This enzyme participates in both the breakdown and synthesis of glucose. In Entamoeba histolytica (strain ATCC 30459 / HM-1:IMSS / ABRM), this protein is Phosphoglucomutase.